Consider the following 349-residue polypeptide: MRVADFSFELPDSLIARHPLAERHGSRLLVLDGPSGALAHKQFTDLLDYLRPGDLMVFNNTRVIPARLFGQKASGGKLEVLVERVLDSHRVLAHVRASKAPKEGAVILIDGGGEAEMVARHDTLFELRFTEEVLPLLERVGHMPLPPYIDRPDDGADRERYQTVYAERAGAVAAPTAGLHFDQALLDKIAAKGVERAFVTLHVGAGTFQPVRVDKIEDHHMHKEWLEVSQDVVDAIEACRARGGRVVAVGTTSVRSLESAARDGVLKAFSGDTDIFIYPGRPFHVVDALVTNFHLPESTLLMLVSAFAGYPETMAAYAAAVEQGYRFFSYGDAMFITRNPAPRGPEDQA.

This sequence belongs to the QueA family. Monomer.

The protein localises to the cytoplasm. The enzyme catalyses 7-aminomethyl-7-carbaguanosine(34) in tRNA + S-adenosyl-L-methionine = epoxyqueuosine(34) in tRNA + adenine + L-methionine + 2 H(+). Its pathway is tRNA modification; tRNA-queuosine biosynthesis. Transfers and isomerizes the ribose moiety from AdoMet to the 7-aminomethyl group of 7-deazaguanine (preQ1-tRNA) to give epoxyqueuosine (oQ-tRNA). In Pseudomonas putida (strain W619), this protein is S-adenosylmethionine:tRNA ribosyltransferase-isomerase.